A 507-amino-acid polypeptide reads, in one-letter code: Keratin, type II cuticular Hb5 (507 aa).

The segment at 1–123 (MSCRSYRISS…PNAQCVKQEE (123 aa)) is head. Residues 123–434 (EKEQIKSLNS…RLLEGEEHRL (312 aa)) enclose the IF rod domain. The segment at 124-158 (KEQIKSLNSRFAAFIDKVRFLEQQNKLLETKWQFY) is coil 1A. The interval 159–168 (QNQRCCESNL) is linker 1. The coil 1B stretch occupies residues 169–269 (EPLFSGYIET…YEEEIRVLQA (101 aa)). A Glycyl lysine isopeptide (Lys-Gly) (interchain with G-Cter in SUMO1) cross-link involves residue K229. The tract at residues 270 to 286 (HISDTSVIVKMDNSRDL) is linker 12. Positions 287-430 (NMDCIIAEIK…ATYRRLLEGE (144 aa)) are coil 2. The interval 431–507 (EHRLCEGVGS…CGSSRSVRFA (77 aa)) is tail.

It belongs to the intermediate filament family. In terms of assembly, heterotetramer of two type I and two type II keratins. In terms of tissue distribution, synthesis occurs immediately above a small population of matrix cells at the base of the hair bulb and the trichocytes lining the dermal papilla and extends upward through the matrix and ends in the lower part of the cortex of the hair shaft.

This chain is Keratin, type II cuticular Hb5 (KRT85), found in Homo sapiens (Human).